We begin with the raw amino-acid sequence, 160 residues long: SsrA-binding protein (160 aa).

It belongs to the SmpB family.

It is found in the cytoplasm. In terms of biological role, required for rescue of stalled ribosomes mediated by trans-translation. Binds to transfer-messenger RNA (tmRNA), required for stable association of tmRNA with ribosomes. tmRNA and SmpB together mimic tRNA shape, replacing the anticodon stem-loop with SmpB. tmRNA is encoded by the ssrA gene; the 2 termini fold to resemble tRNA(Ala) and it encodes a 'tag peptide', a short internal open reading frame. During trans-translation Ala-aminoacylated tmRNA acts like a tRNA, entering the A-site of stalled ribosomes, displacing the stalled mRNA. The ribosome then switches to translate the ORF on the tmRNA; the nascent peptide is terminated with the 'tag peptide' encoded by the tmRNA and targeted for degradation. The ribosome is freed to recommence translation, which seems to be the essential function of trans-translation. This chain is SsrA-binding protein, found in Novosphingobium aromaticivorans (strain ATCC 700278 / DSM 12444 / CCUG 56034 / CIP 105152 / NBRC 16084 / F199).